The chain runs to 262 residues: Phosphatidylglycerol--prolipoprotein diacylglyceryl transferase (262 aa).

A run of 4 helical transmembrane segments spans residues 9–29 (LGPL…ILAV), 41–61 (IIPD…ILGA), 80–100 (IFAI…GALV), and 109–129 (LINT…AQSL). Arg-131 serves as a coordination point for a 1,2-diacyl-sn-glycero-3-phospho-(1'-sn-glycerol). 3 helical membrane passes run 167-187 (QPTF…ILIF), 197-217 (GHIT…IEGM), and 226-246 (GLRV…MIVI).

It belongs to the Lgt family.

Its subcellular location is the cell membrane. The catalysed reaction is L-cysteinyl-[prolipoprotein] + a 1,2-diacyl-sn-glycero-3-phospho-(1'-sn-glycerol) = an S-1,2-diacyl-sn-glyceryl-L-cysteinyl-[prolipoprotein] + sn-glycerol 1-phosphate + H(+). It functions in the pathway protein modification; lipoprotein biosynthesis (diacylglyceryl transfer). Its function is as follows. Catalyzes the transfer of the diacylglyceryl group from phosphatidylglycerol to the sulfhydryl group of the N-terminal cysteine of a prolipoprotein, the first step in the formation of mature lipoproteins. This Streptococcus pneumoniae (strain P1031) protein is Phosphatidylglycerol--prolipoprotein diacylglyceryl transferase.